We begin with the raw amino-acid sequence, 129 residues long: UPF0344 protein MW0851 (129 aa).

The next 4 helical transmembrane spans lie at 1-21 (MLHL…ATYL), 36-56 (LHMI…WILI), 67-87 (MLLT…EVSI), and 99-119 (MFWI…ILPL).

It belongs to the UPF0344 family.

The protein localises to the cell membrane. The chain is UPF0344 protein MW0851 from Staphylococcus aureus (strain MW2).